Reading from the N-terminus, the 379-residue chain is Dual-specificity RNA methyltransferase RlmN (379 aa).

The active-site Proton acceptor is the E90. Positions 96-348 constitute a Radical SAM core domain; it reads EPNRGTLCVS…TTVRKTRGDD (253 aa). C103 and C353 form a disulfide bridge. Residues C110, C114, and C117 each coordinate [4Fe-4S] cluster. Residues 179–180, S211, 233–235, and N310 contribute to the S-adenosyl-L-methionine site; these read GE and SLH. The active-site S-methylcysteine intermediate is C353.

It belongs to the radical SAM superfamily. RlmN family. [4Fe-4S] cluster serves as cofactor.

It localises to the cytoplasm. The catalysed reaction is adenosine(2503) in 23S rRNA + 2 reduced [2Fe-2S]-[ferredoxin] + 2 S-adenosyl-L-methionine = 2-methyladenosine(2503) in 23S rRNA + 5'-deoxyadenosine + L-methionine + 2 oxidized [2Fe-2S]-[ferredoxin] + S-adenosyl-L-homocysteine. The enzyme catalyses adenosine(37) in tRNA + 2 reduced [2Fe-2S]-[ferredoxin] + 2 S-adenosyl-L-methionine = 2-methyladenosine(37) in tRNA + 5'-deoxyadenosine + L-methionine + 2 oxidized [2Fe-2S]-[ferredoxin] + S-adenosyl-L-homocysteine. Functionally, specifically methylates position 2 of adenine 2503 in 23S rRNA and position 2 of adenine 37 in tRNAs. m2A2503 modification seems to play a crucial role in the proofreading step occurring at the peptidyl transferase center and thus would serve to optimize ribosomal fidelity. In Nitrosomonas eutropha (strain DSM 101675 / C91 / Nm57), this protein is Dual-specificity RNA methyltransferase RlmN.